Reading from the N-terminus, the 579-residue chain is Insulin-like growth factor 2 mRNA-binding protein 3 (579 aa).

2 RRM domains span residues 2–75 and 81–156; these read NKLY…HSVP and RKLQ…YIPD. The tract at residues 160–192 is disordered; it reads AQQNPLQQPRGRRGLGQRGSSRQGSPGSVSKQK. Low complexity predominate over residues 177–187; it reads RGSSRQGSPGS. A Phosphoserine modification is found at Ser184. 3 KH domains span residues 195-260, 276-343, and 405-470; these read DLPL…CKSI, EIPL…EEEI, and TETV…QGRI. Residues Lys450 and Lys475 each participate in a glycyl lysine isopeptide (Lys-Gly) (interchain with G-Cter in SUMO2) cross-link. Positions 487–553 constitute a KH 4 domain; the sequence is KLEAHIRVPS…YACQVAQRKI (67 aa). Thr528 carries the phosphothreonine modification.

Belongs to the RRM IMP/VICKZ family. Can form homooligomers and heterooligomers with IGF2BP1 and IGF2BP3 in an RNA-dependent manner. Interacts with IGF2BP1. Interacts with ELAVL1, DHX9, HNRNPU, MATR3 and PABPC1. As to expression, expressed in fetal liver, fetal lung, fetal kidney, fetal thymus, fetal placenta, fetal follicles of ovary and gonocytes of testis, growing oocytes, spermatogonia and semen (at protein level). Expressed in cervix adenocarcinoma, in testicular, pancreatic and renal-cell carcinomas (at protein level). Expressed ubiquitously during fetal development at 8 and 14 weeks of gestation. Expressed in ovary, testis, brain, placenta, pancreatic cancer tissues and pancreatic cancer cell lines.

Its subcellular location is the nucleus. The protein localises to the cytoplasm. It localises to the P-body. The protein resides in the stress granule. Functionally, RNA-binding factor that may recruit target transcripts to cytoplasmic protein-RNA complexes (mRNPs). This transcript 'caging' into mRNPs allows mRNA transport and transient storage. It also modulates the rate and location at which target transcripts encounter the translational apparatus and shields them from endonuclease attacks or microRNA-mediated degradation. Preferentially binds to N6-methyladenosine (m6A)-containing mRNAs and increases their stability. Binds to the 3'-UTR of CD44 mRNA and stabilizes it, hence promotes cell adhesion and invadopodia formation in cancer cells. Binds to beta-actin/ACTB and MYC transcripts. Increases MYC mRNA stability by binding to the coding region instability determinant (CRD) and binding is enhanced by m6A-modification of the CRD. Binds to the 5'-UTR of the insulin-like growth factor 2 (IGF2) mRNAs. The chain is Insulin-like growth factor 2 mRNA-binding protein 3 (IGF2BP3) from Homo sapiens (Human).